A 586-amino-acid chain; its full sequence is MKQSVSAEQIELKSSLPGSKKVYVDGPREGMKVPMREIEQSDTNGVPNPPIRVYDTSGPYTDPAYKVELEKGIPTPRHSWILERGDVEAYEGREVKPEDDGVKVASKHTPVFPQMDRKPLRAKQGANVTQMHYARNGIITSEMEYVAIREGVEPEFVRKEIAEGRAILPANINHPEAEPMIIGRNFHVKVNANIGNSAVSSSIAEEVEKMTWATRWGADTIMDLSTGKNIHTTREWIIRNAPVPVGTVPIYQALEKVNGIAEDLTWEVYRDTLIEQAEQGVDYFTIHAGVLLRYIPITAKRTTGIVSRGGSIMAQWCLFHHKENFLYTHFEEICEIMKQYDVSFSLGDGLRPGSIADANDEAQFSELETLGELTKIAWKHDVQVMIEGPGHVPMHLIKENMEKELDICQGAPFYTLGPLTTDIAPGYDHITSAIGAAMIGWFGTAMLCYVTPKEHLGLPNKDDVREGVITYKIAAHAADLAKGHKTAHQRDDALSKARFEFRWRDQFNLSLDPERAMEYHDETLPAEGAKTAHFCSMCGPKFCSMRISHDIREYAKENDLETTEAIEKGMKEKAKEFKDTGSHLYQ.

Positions 1–59 are disordered; the sequence is MKQSVSAEQIELKSSLPGSKKVYVDGPREGMKVPMREIEQSDTNGVPNPPIRVYDTSGP. Over residues 22 to 39 the composition is skewed to basic and acidic residues; the sequence is VYVDGPREGMKVPMREIE. Substrate-binding positions include asparagine 193, methionine 222, tyrosine 251, histidine 287, 307-309, 348-351, and glutamate 387; these read SRG and DGLR. Histidine 391 provides a ligand contact to Zn(2+). Residue tyrosine 414 coordinates substrate. Histidine 455 contacts Zn(2+). 3 residues coordinate [4Fe-4S] cluster: cysteine 535, cysteine 538, and cysteine 543.

It belongs to the ThiC family. Requires [4Fe-4S] cluster as cofactor.

It carries out the reaction 5-amino-1-(5-phospho-beta-D-ribosyl)imidazole + S-adenosyl-L-methionine = 4-amino-2-methyl-5-(phosphooxymethyl)pyrimidine + CO + 5'-deoxyadenosine + formate + L-methionine + 3 H(+). It participates in cofactor biosynthesis; thiamine diphosphate biosynthesis. Functionally, catalyzes the synthesis of the hydroxymethylpyrimidine phosphate (HMP-P) moiety of thiamine from aminoimidazole ribotide (AIR) in a radical S-adenosyl-L-methionine (SAM)-dependent reaction. The polypeptide is Phosphomethylpyrimidine synthase (Bacillus cereus (strain Q1)).